The sequence spans 1632 residues: uncharacterized protein (1632 aa).

Over residues 1-15 (MSNNKQTAAPAATSN) the composition is skewed to polar residues. The interval 1-23 (MSNNKQTAAPAATSNEKAENGAE) is disordered. The Cytoplasmic segment spans residues 1-63 (MSNNKQTAAP…TKDAFKGKYR (63 aa)). The chain crosses the membrane as a helical span at residues 64-86 (VFYGNGLHTSIMFGAGTAALDLM). Over 87-1632 (TPGSFLPPFP…ESDGEEMSGE (1546 aa)) the chain is Extracellular. 2 N-linked (GlcNAc...) asparagine; by host glycosylation sites follow: asparagine 149 and asparagine 274. The segment at 516 to 538 (ELSSQLGDTDTKKEQKEKRSKQG) is disordered. N-linked (GlcNAc...) asparagine; by host glycosylation is found at asparagine 654, asparagine 719, and asparagine 797. Residues 838–890 (IKGTKKSDDGDSKTDGSGDMEDDFTSLAKMTNRKRKAGGKDGPSKKKKKDGAD) are disordered. Composition is skewed to basic and acidic residues over residues 842–853 (KKSDDGDSKTDG) and 875–890 (GGKDGPSKKKKKDGAD). 6 N-linked (GlcNAc...) asparagine; by host glycosylation sites follow: asparagine 1012, asparagine 1031, asparagine 1261, asparagine 1339, asparagine 1511, and asparagine 1546. Positions 1603-1632 (PSAMDVDEDEDEDMDDESDDESDGEEMSGE) are disordered. The span at 1607-1632 (DVDEDEDEDMDDESDDESDGEEMSGE) shows a compositional bias: acidic residues.

It is found in the host membrane. This is an uncharacterized protein from Ostreid herpesvirus 1 (isolate France) (OsHV-1).